The sequence spans 561 residues: Amidophosphoribosyltransferase 2, chloroplastic (561 aa).

Positions 1-27 (MAATSSISSSLSLNAKPNKLSNNNNNN) are enriched in low complexity. The disordered stretch occupies residues 1–36 (MAATSSISSSLSLNAKPNKLSNNNNNNKPHRFLRNP). A chloroplast-targeting transit peptide spans 1–53 (MAATSSISSSLSLNAKPNKLSNNNNNNKPHRFLRNPFLNPSSSSFSPLPASIS). Cys87 serves as the catalytic Nucleophile. Residues 87–307 (CGVVGIYGDS…PGEVLVVDKD (221 aa)) enclose the Glutamine amidotransferase type-2 domain. Residues Cys323, Cys469, Cys520, and Cys523 each contribute to the [4Fe-4S] cluster site.

It in the C-terminal section; belongs to the purine/pyrimidine phosphoribosyltransferase family. [4Fe-4S] cluster serves as cofactor. It depends on Mg(2+) as a cofactor. As to expression, mostly expressed in leaves, and, to a lower extent, in cotyledons.

The protein localises to the plastid. Its subcellular location is the chloroplast stroma. It catalyses the reaction 5-phospho-beta-D-ribosylamine + L-glutamate + diphosphate = 5-phospho-alpha-D-ribose 1-diphosphate + L-glutamine + H2O. Its pathway is purine metabolism; IMP biosynthesis via de novo pathway; N(1)-(5-phospho-D-ribosyl)glycinamide from 5-phospho-alpha-D-ribose 1-diphosphate: step 1/2. Inhibited by the phenyltriazole acetic acid compound [5-(4-chlorophenyl)-1-isopropyl-1H-[1,2,4]triazol-3-yl]-acetic acid (DAS734), a bleaching herbicide. In terms of biological role, catalyzes the first committed step of 'de novo purine biosynthesis from glutamine. Required for chloroplast biogenesis and cell division. Confers sensitivity to the phenyltriazole acetic acid compound [5-(4-chlorophenyl)-1-isopropyl-1H-[1,2,4]triazol-3-yl]-acetic acid (DAS734), a bleaching herbicide. The chain is Amidophosphoribosyltransferase 2, chloroplastic (ASE2) from Arabidopsis thaliana (Mouse-ear cress).